A 663-amino-acid polypeptide reads, in one-letter code: UvrABC system protein B (663 aa).

Positions aspartate 31–glutamate 271 constitute a Helicase ATP-binding domain. An ATP-binding site is contributed by glycine 44–threonine 51. The Beta-hairpin motif lies at tyrosine 97–valine 120. The region spanning glutamine 435 to isoleucine 601 is the Helicase C-terminal domain. The UVR domain occupies glutamine 627–methionine 662.

The protein belongs to the UvrB family. As to quaternary structure, forms a heterotetramer with UvrA during the search for lesions. Interacts with UvrC in an incision complex.

It is found in the cytoplasm. The UvrABC repair system catalyzes the recognition and processing of DNA lesions. A damage recognition complex composed of 2 UvrA and 2 UvrB subunits scans DNA for abnormalities. Upon binding of the UvrA(2)B(2) complex to a putative damaged site, the DNA wraps around one UvrB monomer. DNA wrap is dependent on ATP binding by UvrB and probably causes local melting of the DNA helix, facilitating insertion of UvrB beta-hairpin between the DNA strands. Then UvrB probes one DNA strand for the presence of a lesion. If a lesion is found the UvrA subunits dissociate and the UvrB-DNA preincision complex is formed. This complex is subsequently bound by UvrC and the second UvrB is released. If no lesion is found, the DNA wraps around the other UvrB subunit that will check the other stand for damage. This Streptococcus uberis (strain ATCC BAA-854 / 0140J) protein is UvrABC system protein B.